Reading from the N-terminus, the 180-residue chain is Large ribosomal subunit protein uL22 (180 aa).

Disordered regions lie at residues Met-1–Arg-20 and Pro-160–Ala-180. The span at Lys-8–Arg-20 shows a compositional bias: polar residues.

It belongs to the universal ribosomal protein uL22 family.

The sequence is that of Large ribosomal subunit protein uL22 (rpl17) from Dictyostelium discoideum (Social amoeba).